We begin with the raw amino-acid sequence, 275 residues long: MAALDGLPPLRDVIQRHGLDARKALGQNFLLDLNLTQKIARTAGALEDATVFEVGPGPGGLTRAILALGARKVIAIERDTRCLPALAEIADHYPGRLEVIEGDALKTDFETLAPQGPIKIIANLPYNVGTQLLVNWLLPKAWPPFWQSLTLMFQKEVGERIVANEDDDHYGRLGVLCGWRTEARMAFDVPPQAFTPPPKVTSTVVQLTPRENPIPCAVSNLEKVTQAAFGQRRKMLRQSLKPLGGERLLVKAGIDPARRAETLSVKEFCLLANSL.

S-adenosyl-L-methionine-binding residues include Asn-28, Leu-30, Gly-55, Glu-77, Asp-103, and Asn-123.

The protein belongs to the class I-like SAM-binding methyltransferase superfamily. rRNA adenine N(6)-methyltransferase family. RsmA subfamily.

It localises to the cytoplasm. The enzyme catalyses adenosine(1518)/adenosine(1519) in 16S rRNA + 4 S-adenosyl-L-methionine = N(6)-dimethyladenosine(1518)/N(6)-dimethyladenosine(1519) in 16S rRNA + 4 S-adenosyl-L-homocysteine + 4 H(+). Functionally, specifically dimethylates two adjacent adenosines (A1518 and A1519) in the loop of a conserved hairpin near the 3'-end of 16S rRNA in the 30S particle. May play a critical role in biogenesis of 30S subunits. This is Ribosomal RNA small subunit methyltransferase A from Rhizobium johnstonii (strain DSM 114642 / LMG 32736 / 3841) (Rhizobium leguminosarum bv. viciae).